Consider the following 427-residue polypeptide: Serine hydroxymethyltransferase (427 aa).

Position 122-124 (122-124 (GHI)) interacts with (6S)-5,6,7,8-tetrahydrofolate. N6-(pyridoxal phosphate)lysine is present on Lys228.

Belongs to the SHMT family. In terms of assembly, homodimer. Pyridoxal 5'-phosphate serves as cofactor.

Its subcellular location is the cytoplasm. It functions in the pathway amino-acid biosynthesis; glycine biosynthesis; glycine from L-serine: step 1/1. Functionally, catalyzes the reversible interconversion of serine and glycine with a modified folate serving as the one-carbon carrier. Also exhibits a pteridine-independent aldolase activity toward beta-hydroxyamino acids, producing glycine and aldehydes, via a retro-aldol mechanism. This is Serine hydroxymethyltransferase from Thermococcus onnurineus (strain NA1).